The following is a 653-amino-acid chain: MTGPLLQLTRVTRRFPAGEKDVVVLDDVSLSIDAGEIVAIVGASGSGKSTLMNILGCLDHPSSGSYTVGGRETSELESDELARLRREHFGFIFQRYHLLPHLCAAENVEMPAVYAGSAQAQRRERALALLARLGLSDRASHRPSQLSGGQQQRVSIARALMNGGEVILADEPTGALDSKSGRDVIRVLRELNALGHTVIIVTHDEQVAAHARRIIEISDGRIVGDRLNPHADAADAAPDASGGAQPQRARRLSAGVGRFAEAFRMAWIALVSHRLRTLLTMLGIIIGITSVVSIVAIGEGAKRYMLDEIGSIGTNTINVYPGADWGDSRADAIQTLVAADAAALADQIYIDSATPETSRSLLLRYRNVDVNALVSGVGERFFQVRGMKLAQGIAFGADEVRRQAQVAVIDENTRRKLFGANPNPLGEVILIDNLPCVVIGVTASKKSAFGDMKNLNVWVPYTTASGRLFGQRHLDSITVRVRDGQPSDAAERSLTKLMLQRHGRKDFFTYNMDSVVKTVEKTGQSLTLLLSLIAVISLVVGGIGVMNIMLVSVTERTREIGIRMAVGARQTDIMQQFLVEAVTVCLMGGAIGIVLSFGMSFVFSLFVDQWKMVFSAASIASAFLCSTLIGVVFGFMPARNASRLDPIDALARD.

One can recognise an ABC transporter domain in the interval Leu6–Ala244. Gly42–Ser49 contributes to the ATP binding site. 4 helical membrane passes run Leu278–Gly298, Leu526–Met546, Met587–Val607, and Ala616–Met636.

This sequence belongs to the ABC transporter superfamily. Macrolide exporter (TC 3.A.1.122) family. Homodimer.

It is found in the cell inner membrane. Its function is as follows. Non-canonical ABC transporter that contains transmembrane domains (TMD), which form a pore in the inner membrane, and an ATP-binding domain (NBD), which is responsible for energy generation. Confers resistance against macrolides. This is Macrolide export ATP-binding/permease protein MacB from Burkholderia pseudomallei (strain 1710b).